We begin with the raw amino-acid sequence, 702 residues long: Transposon Tn7 transposition protein TnsB (702 aa).

The segment at 1–139 (MWQINEVVLF…GQTPNALIPD (139 aa)) is DNA-binding domain 1 (DBD1). A DNA-binding region (H-T-H motif) is located at residues 105-124 (VEHVVQEHKVTKATVYKLLR). The interval 137 to 160 (IPDYKNSGAPGERRSATGTAKIGR) is disordered. The tract at residues 140–172 (YKNSGAPGERRSATGTAKIGRAREYGKGEGTKV) is linker 1. A DNA-binding domain 2 (DBD2) region spans residues 173–233 (TPEIERLFRL…QFRYFYDREY (61 aa)). A linker 2 region spans residues 234–267 (PKAQRLKSRVKAGVYKKDVRPLSSTATSQALGPG). The Integrase catalytic domain maps to 262 to 480 (QALGPGSRYE…IPVQLWQWGM (219 aa)). The interval 268-582 (SRYEIDATIA…RSRQFKGLSF (315 aa)) is catalytic domain (CD). Positions 589-702 (QAQEKHNKAN…FQDPPEKDES (114 aa)) are C-terminal domain. The interval 623-702 (KLTPSTTEPK…FQDPPEKDES (80 aa)) is disordered.

Heteromer with TnsA.

Functionally, sequence-specific, DNA-binding protein required for Tn7 transposition. Recognizes sequences necessary for recombination at both left and right ends of Tn7 and, together with TnsA, forms the transposase. TnsB executes the 3'-DNA strand breakage and joining reactions. TnsB binding introduces DNA bending. There are 3 DNA-binding sites in the left and 4 in the right end of Tn7; as TnsB levels increase more TnsB is bound, suggesting high protein levels contribute to transposon immunity. Binding of TnsB to the transposon right end represses expression of the downstream transposition genes. TnsABC + TnsD promote high-frequency insertion of Tn7 into a specific target site known as att-Tn7 whereas TnsABC + TnsE promote low-frequency insertion into many different sites. The sequence is that of Transposon Tn7 transposition protein TnsB from Escherichia coli.